Consider the following 140-residue polypeptide: uncharacterized protein (140 aa).

Positions 80 to 115 (KNGTRRHALPSPLEGSFQPGRQIPPPQTPSTDPQTL) are disordered.

This is an uncharacterized protein from Homo sapiens (Human).